A 478-amino-acid chain; its full sequence is MKMSIRIPPRLLELAGRSLLRDQALAVSTLEELPTELFPPLFMEAFSRRRCEALKLMVQAWPFRRLPLRPLIKMPCLEAFQAVLDGLDALLTQGVRPRRWKLQVLDLQDVCENFWMVWSEAMAHGCFLNAKRNKKPVQDCPRMRGRQPLTVFVELWLKNRTLDEYLTCLLLWVKQRRDLLHLCCKKLKILGMPFRNIRSILKMVNLDCIQEVEVNCKWILPILTQFTPYLGHLRNLQKLVLSHMDVSRYVSPEQKKEIVTQFTTQFLKLRCLQKLYMNSVSFLEGHLDQLLSCLKTSLKVLTITNCVLLESDLKHLSQCPSISQLKTLDLSGIRLTNYSLVPLQILLEKVAATLEYLDLDDCGIIDSQVNAILPALSRCFELNTFSFCGNPICMATLENLLSHTIILKNLCLELYPAPQESYGADGTLCWSRFAQIRAELMKKVRHLRHPKRILFCTDNCPDHGDRSFYDLEADQYCC.

Residues 99–126 (RWKLQVLDLQDVCENFWMVWSEAMAHGC) form an LRR 1; degenerate repeat. The LRR 2; degenerate repeat unit spans residues 181–205 (HLCCKKLKILGMPFRNIRSILKMVN). One copy of the LRR 3; degenerate repeat lies at 206–232 (LDCIQEVEVNCKWILPILTQFTPYLGH). Residues 233-268 (LRNLQKLVLSHMDVSRYVSPEQKKEIVTQFTTQFLK) form an LRR 4; degenerate repeat. 5 LRR repeats span residues 269-294 (LRCL…LSCL), 295-326 (KTSL…SQLK), 327-347 (TLDL…QILL), 351-378 (AATL…ALSR), and 379-403 (CFEL…LLSH).

This sequence belongs to the PRAME family.

This chain is PRAME family member 11, found in Homo sapiens (Human).